Here is a 107-residue protein sequence, read N- to C-terminus: Thioredoxin-1 (107 aa).

In terms of domain architecture, Thioredoxin spans 2-106 (ASVRTMNDYH…LTNMMAKLVK (105 aa)). Active-site nucleophile residues include cysteine 31 and cysteine 34. Cysteine 31 and cysteine 34 are joined by a disulfide.

Belongs to the thioredoxin family. As to expression, ovary specific. Expressed present in the nurse cells from stage 9 of ovary development and is transported into the oocyte. Expressed throughout oogenesis.

It is found in the nucleus. Participates in various redox reactions through the reversible oxidation of its active center dithiol to a disulfide and catalyzes dithiol-disulfide exchange reactions. As a reducing substrate of peroxiredoxin 1, thioredoxin 2 is preferred over thioredoxin 1. Required for female meiosis and early embryonic development. This is Thioredoxin-1 (dhd) from Drosophila melanogaster (Fruit fly).